The chain runs to 545 residues: CTP synthase (545 aa).

Residues 1 to 266 (MTTNYIFVTG…DDYICKRFSL (266 aa)) form an amidoligase domain region. Ser-14 contributes to the CTP binding site. Ser-14 provides a ligand contact to UTP. ATP contacts are provided by residues 15–20 (SLGKGI) and Asp-72. 2 residues coordinate Mg(2+): Asp-72 and Glu-140. CTP-binding positions include 147-149 (DIE), 187-192 (KTKPTQ), and Lys-223. UTP is bound by residues 187–192 (KTKPTQ) and Lys-223. 239 to 241 (KDI) contributes to the ATP binding site. The region spanning 291–542 (TIGMVGKYVA…VKAAGAYQKR (252 aa)) is the Glutamine amidotransferase type-1 domain. Gly-352 is an L-glutamine binding site. The active-site Nucleophile; for glutamine hydrolysis is the Cys-379. L-glutamine-binding positions include 380-383 (LGMQ), Glu-403, and Arg-470. Active-site residues include His-515 and Glu-517.

It belongs to the CTP synthase family. In terms of assembly, homotetramer.

The catalysed reaction is UTP + L-glutamine + ATP + H2O = CTP + L-glutamate + ADP + phosphate + 2 H(+). It carries out the reaction L-glutamine + H2O = L-glutamate + NH4(+). It catalyses the reaction UTP + NH4(+) + ATP = CTP + ADP + phosphate + 2 H(+). The protein operates within pyrimidine metabolism; CTP biosynthesis via de novo pathway; CTP from UDP: step 2/2. Allosterically activated by GTP, when glutamine is the substrate; GTP has no effect on the reaction when ammonia is the substrate. The allosteric effector GTP functions by stabilizing the protein conformation that binds the tetrahedral intermediate(s) formed during glutamine hydrolysis. Inhibited by the product CTP, via allosteric rather than competitive inhibition. Its function is as follows. Catalyzes the ATP-dependent amination of UTP to CTP with either L-glutamine or ammonia as the source of nitrogen. Regulates intracellular CTP levels through interactions with the four ribonucleotide triphosphates. This is CTP synthase from Pectobacterium atrosepticum (strain SCRI 1043 / ATCC BAA-672) (Erwinia carotovora subsp. atroseptica).